The sequence spans 416 residues: DNA-guanine transglycosylase (416 aa).

The active-site Proton acceptor is the aspartate 95. Catalysis depends on aspartate 256, which acts as the Nucleophile. Residues cysteine 368, cysteine 370, cysteine 373, and histidine 395 each coordinate Zn(2+).

The protein belongs to the DNA-guanine transglycosylase family. The cofactor is Zn(2+).

In terms of biological role, part of the dpd cluster involved in the insertion of 7-deazaguanine derivatives in DNA. DpdA may insert 7-cyano-7-deazaguanine (preQ0) into DNA with the help of DpdB. DpdA and dpdB are necessary and sufficient to synthesize 2'-deoxy-7-cyano-7-deazaguanosine (dPreQ0). The protein is DNA-guanine transglycosylase of Salmonella montevideo.